A 63-amino-acid polypeptide reads, in one-letter code: Iota-crystallin (63 aa).

This sequence belongs to the calycin superfamily. Fatty-acid binding protein (FABP) family.

Functionally, binds vitamin A2 in the eye lens and thus functions as a UV filter. Intracellular transport of retinol. This chain is Iota-crystallin (CRBPI), found in Gonatodes vittatus (Wiegmann's striped gecko).